The primary structure comprises 341 residues: D-erythrose-4-phosphate dehydrogenase (341 aa).

14 to 15 (RI) provides a ligand contact to NAD(+). Residues 156-158 (SCT), Arg202, 215-216 (TR), and Arg238 contribute to the substrate site. The active-site Nucleophile is the Cys157. Asn320 is a binding site for NAD(+).

It belongs to the glyceraldehyde-3-phosphate dehydrogenase family. Epd subfamily. Homotetramer.

The protein resides in the cytoplasm. The enzyme catalyses D-erythrose 4-phosphate + NAD(+) + H2O = 4-phospho-D-erythronate + NADH + 2 H(+). It functions in the pathway cofactor biosynthesis; pyridoxine 5'-phosphate biosynthesis; pyridoxine 5'-phosphate from D-erythrose 4-phosphate: step 1/5. Its function is as follows. Catalyzes the NAD-dependent conversion of D-erythrose 4-phosphate to 4-phosphoerythronate. This chain is D-erythrose-4-phosphate dehydrogenase, found in Idiomarina loihiensis (strain ATCC BAA-735 / DSM 15497 / L2-TR).